An 89-amino-acid chain; its full sequence is Large ribosomal subunit protein bL27 (89 aa).

The interval 1–22 (MAHKKAGGSSRNGRDSESKRLG) is disordered.

This sequence belongs to the bacterial ribosomal protein bL27 family.

The chain is Large ribosomal subunit protein bL27 from Bartonella tribocorum (strain CIP 105476 / IBS 506).